We begin with the raw amino-acid sequence, 569 residues long: Peroxisomal targeting signal receptor (569 aa).

A Glycyl cysteine thioester (Cys-Gly) (interchain with G-Cter in ubiquitin) cross-link involves residue C9. The amphipathic helix 1 (AH1) stretch occupies residues 10-32 (AANANPLAQFFKQSQHDTSLEQS). K21 is covalently cross-linked (Glycyl lysine isopeptide (Lys-Gly) (interchain with G-Cter in ubiquitin)). The tract at residues 23–42 (SQHDTSLEQSLRNSAHDTHQ) is disordered. The tract at residues 57-72 (RAHMEQFMNQSTPFNF) is amphipathic helix 2 (AH2). 2 short sequence motifs (wxxxF/Y motif) span residues 118–122 (WSSEF) and 183–187 (WEQQF). Positions 218–234 (FDQVWDNIQETYADNML) are amphipathic helix 4 (AH4). Positions 243–247 (WEKDF) match the WxxxF/Y motif 3 motif. 7 TPR repeats span residues 272 to 305 (LDAYEIGIKLMESGAKLSEAALAFEAAVEQNPGH), 306 to 339 (VDAWLRLGQVQTQNEKELAGIAALEKCLELSPQN), 340 to 377 (LVALMTLAISYINEGYDNAAFATLERWIETKYPEVAER), 378 to 415 (ARNANPDIQADDRFSLNKRVTQLFIKAAQLSPEGANMD), 416 to 449 (SEVQTGLGVLFYSMEEYSKTLDCFQAAIEHNPND), 450 to 483 (ALAWNRLGASLANSNKPEQAIEAYSRTLQLNPNF), and 484 to 517 (VRARYNLGVSFINMGMYRDAVDHLLTGLSMHEVE).

This sequence belongs to the peroxisomal targeting signal receptor family. Interacts (via WxxxF/Y and LVxEF motifs) with PEX14; promoting translocation through the PEX13-PEX14 docking complex. In terms of processing, monoubiquitinated at Cys-9 by PEX2 during PEX5 passage through the retrotranslocation channel: monoubiquitination acts as a signal for PEX5 extraction and is required for proper export from peroxisomes and recycling. When PEX5 recycling is compromised, polyubiquitinated at Lys-21 by PEX10 during its passage through the retrotranslocation channel, leading to its degradation.

Its subcellular location is the cytoplasm. The protein localises to the cytosol. The protein resides in the peroxisome matrix. Functionally, receptor that mediates peroxisomal import of proteins containing a C-terminal PTS1-type tripeptide peroxisomal targeting signal (SKL-type). Binds to cargo proteins containing a PTS1 peroxisomal targeting signal in the cytosol, and translocates them into the peroxisome matrix by passing through the PEX13-PEX14 docking complex along with cargo proteins. PEX5 receptor is then retrotranslocated into the cytosol, leading to release of bound cargo in the peroxisome matrix, and reset for a subsequent peroxisome import cycle. In Pichia angusta (Yeast), this protein is Peroxisomal targeting signal receptor (PEX5).